The primary structure comprises 138 residues: Probable phospholipase A2 homolog 1 (138 aa).

The first 21 residues, 1–21 (MPPRSPLLALVFLAAGVLSSA), serve as a signal peptide directing secretion. 6 disulfide bridges follow: Cys-29–Cys-56, Cys-33–Cys-62, Cys-38–Cys-109, Cys-49–Cys-69, Cys-68–Cys-93, and Cys-75–Cys-86. 3 residues coordinate Ca(2+): Tyr-48, Gly-50, and Trp-53. Residue His-72 is part of the active site. Residue Asp-73 coordinates Ca(2+).

This sequence belongs to the phospholipase A2 family. Ca(2+) is required as a cofactor.

The protein localises to the secreted. It carries out the reaction a 1,2-diacyl-sn-glycero-3-phosphocholine + H2O = a 1-acyl-sn-glycero-3-phosphocholine + a fatty acid + H(+). In terms of biological role, PA2 catalyzes the calcium-dependent hydrolysis of the 2-acyl groups in 3-sn-phosphoglycerides. Releases lysophospholipids (LPLs) and free fatty acids (FFAs) from membrane phospholipids in response to hormones and other external stimuli. The sequence is that of Probable phospholipase A2 homolog 1 (PLA2-I) from Oryza sativa subsp. japonica (Rice).